Here is a 158-residue protein sequence, read N- to C-terminus: Ribosome maturation factor RimP (158 aa).

It belongs to the RimP family.

Its subcellular location is the cytoplasm. Required for maturation of 30S ribosomal subunits. The chain is Ribosome maturation factor RimP from Pseudomonas fluorescens (strain Pf0-1).